The following is a 1634-amino-acid chain: DNA polymerase (1634 aa).

DOD-type homing endonuclease domains lie at leucine 552–isoleucine 693 and phenylalanine 1163–isoleucine 1295.

Belongs to the DNA polymerase type-B family. Post-translationally, this protein undergoes a protein self splicing that involves a post-translational excision of the intervening region (intein) followed by peptide ligation.

The catalysed reaction is DNA(n) + a 2'-deoxyribonucleoside 5'-triphosphate = DNA(n+1) + diphosphate. This is DNA polymerase (pol) from Methanocaldococcus jannaschii (strain ATCC 43067 / DSM 2661 / JAL-1 / JCM 10045 / NBRC 100440) (Methanococcus jannaschii).